Reading from the N-terminus, the 453-residue chain is Adenylyltransferase and sulfurtransferase MOCS3 (453 aa).

At threonine 62 the chain carries Phosphothreonine. Residues glycine 101, aspartate 122, 129 to 133 (SNFHR), lysine 146, and 190 to 191 (DN) contribute to the ATP site. The Zn(2+) site is built by cysteine 231 and cysteine 234. Cysteine 248 functions as the Glycyl thioester intermediate; for adenylyltransferase activity in the catalytic mechanism. The Zn(2+) site is built by cysteine 306 and cysteine 309. Residues 355 to 451 (QAKPHLLIDV…WTSNIDPNFP (97 aa)) enclose the Rhodanese domain. Cysteine 410 acts as the Cysteine persulfide intermediate; for sulfurtransferase activity in catalysis.

It in the N-terminal section; belongs to the HesA/MoeB/ThiF family. UBA4 subfamily. Zn(2+) serves as cofactor.

Its subcellular location is the cytoplasm. It localises to the cytosol. The enzyme catalyses [molybdopterin-synthase sulfur-carrier protein]-C-terminal Gly-Gly + ATP + H(+) = [molybdopterin-synthase sulfur-carrier protein]-C-terminal Gly-Gly-AMP + diphosphate. The catalysed reaction is [molybdopterin-synthase sulfur-carrier protein]-C-terminal Gly-Gly-AMP + S-sulfanyl-L-cysteinyl-[cysteine desulfurase] + AH2 = [molybdopterin-synthase sulfur-carrier protein]-C-terminal-Gly-aminoethanethioate + L-cysteinyl-[cysteine desulfurase] + A + AMP + 2 H(+). It functions in the pathway tRNA modification; 5-methoxycarbonylmethyl-2-thiouridine-tRNA biosynthesis. The protein operates within cofactor biosynthesis; molybdopterin biosynthesis. Functionally, plays a central role in 2-thiolation of mcm(5)S(2)U at tRNA wobble positions of cytosolic tRNA(Lys), tRNA(Glu) and tRNA(Gln). Also essential during biosynthesis of the molybdenum cofactor. Acts by mediating the C-terminal thiocarboxylation of sulfur carriers URM1 and MOCS2A. Its N-terminus first activates URM1 and MOCS2A as acyl-adenylates (-COAMP), then the persulfide sulfur on the catalytic cysteine is transferred to URM1 and MOCS2A to form thiocarboxylation (-COSH) of their C-terminus. The reaction probably involves hydrogen sulfide that is generated from the persulfide intermediate and that acts as a nucleophile towards URM1 and MOCS2A. Subsequently, a transient disulfide bond is formed. Does not use thiosulfate as sulfur donor; NFS1 probably acting as a sulfur donor for thiocarboxylation reactions. This chain is Adenylyltransferase and sulfurtransferase MOCS3, found in Drosophila sechellia (Fruit fly).